Reading from the N-terminus, the 334-residue chain is Trans-3-hydroxy-L-proline dehydratase (334 aa).

Cysteine 91 functions as the Proton acceptor in the catalytic mechanism. Residues 92 to 93, aspartate 250, and 255 to 256 each bind substrate; these read GH and GT.

It belongs to the proline racemase family.

The enzyme catalyses trans-3-hydroxy-L-proline = 1-pyrroline-2-carboxylate + H2O. In terms of biological role, catalyzes the dehydration of trans-3-hydroxy-L-proline (t3LHyp) to Delta(1)-pyrroline-2-carboxylate (Pyr2C). Is likely involved in a degradation pathway that converts t3LHyp to L-proline. Can also catalyze the epimerization of trans-4-hydroxy-L-proline (t4LHyp) to cis-4-hydroxy-D-proline (c4DHyp) in vitro. Displays no proline racemase activity. The chain is Trans-3-hydroxy-L-proline dehydratase from Bacillus thuringiensis subsp. konkukian (strain 97-27).